Reading from the N-terminus, the 398-residue chain is Transcription factor kk1f (398 aa).

The tract at residues 1–28 (MTFVETVAVPDNEERPSAGHNRPVADST) is disordered. The bZIP domain maps to 31-62 (PNAREMKVQNRVAQRTHHRRLKTKLEVLRERL). Residues 34–50 (REMKVQNRVAQRTHHRR) are basic motif. A leucine-zipper region spans residues 51-58 (LKTKLEVL).

The protein belongs to the bZIP family.

The protein resides in the nucleus. It functions in the pathway secondary metabolite biosynthesis. Transcription factor; part of the gene cluster that mediates the biosynthesis of KK-1, a novel cyclic depsipeptide with 10 residues which is a promising active compound with high activity against many plant pathogens, especially Botrytis cinerea. Positively regulates the expression of all the genes from the KK-1 biosynthesis gene cluster. The sequence is that of Transcription factor kk1f from Curvularia clavata.